A 45-amino-acid chain; its full sequence is MVYKCAHCKQTVEVDKDMKGVRCQYCGHRILIKERPTAIKRVPAV.

Zn(2+) is bound by residues Cys8, Cys23, and Cys26.

It belongs to the archaeal Rpo12/eukaryotic RPC10 RNA polymerase subunit family. As to quaternary structure, part of the RNA polymerase complex. Zn(2+) serves as cofactor.

It is found in the cytoplasm. It catalyses the reaction RNA(n) + a ribonucleoside 5'-triphosphate = RNA(n+1) + diphosphate. Its function is as follows. DNA-dependent RNA polymerase (RNAP) catalyzes the transcription of DNA into RNA using the four ribonucleoside triphosphates as substrates. This chain is DNA-directed RNA polymerase subunit Rpo12, found in Methanocella arvoryzae (strain DSM 22066 / NBRC 105507 / MRE50).